The chain runs to 597 residues: Elongation factor 4 (597 aa).

The 183-residue stretch at 2 to 184 (KHIRNFSIIA…NIVTAIPPPE (183 aa)) folds into the tr-type G domain. Residues 14 to 19 (DHGKST) and 131 to 134 (NKID) each bind GTP.

Belongs to the TRAFAC class translation factor GTPase superfamily. Classic translation factor GTPase family. LepA subfamily.

It localises to the cell inner membrane. It catalyses the reaction GTP + H2O = GDP + phosphate + H(+). Its function is as follows. Required for accurate and efficient protein synthesis under certain stress conditions. May act as a fidelity factor of the translation reaction, by catalyzing a one-codon backward translocation of tRNAs on improperly translocated ribosomes. Back-translocation proceeds from a post-translocation (POST) complex to a pre-translocation (PRE) complex, thus giving elongation factor G a second chance to translocate the tRNAs correctly. Binds to ribosomes in a GTP-dependent manner. This Vibrio atlanticus (strain LGP32) (Vibrio splendidus (strain Mel32)) protein is Elongation factor 4.